Here is a 463-residue protein sequence, read N- to C-terminus: Peptidylprolyl isomerase cyp7 (463 aa).

The region spanning alanine 11–valine 166 is the PPIase cyclophilin-type domain. The disordered stretch occupies residues valine 224–glutamate 275. A compositionally biased stretch (polar residues) spans threonine 232–glutamate 243. Positions serine 250–serine 261 are enriched in low complexity. The span at alanine 262–valine 271 shows a compositional bias: polar residues.

This sequence belongs to the cyclophilin-type PPIase family. CWC27 subfamily. As to quaternary structure, belongs to the 40S cdc5-associated complex (or cwf complex), a spliceosome sub-complex reminiscent of a late-stage spliceosome composed of the U2, U5 and U6 snRNAs and at least brr2, cdc5, cwf2/prp3, cwf3/syf1, cwf4/syf3, cwf5/ecm2, spp42/cwf6, cwf7/spf27, cwf8, cwf9, cwf10, cwf11, cwf12, prp45/cwf13, cwf14, cwf15, cwf16, cwf17, cwf18, cwf19, cwf20, cwf21, cwf22, cwf23, cwf24, cwf25, cwf26, cyp7/cwf27, cwf28, cwf29/ist3, lea1, msl1, prp5/cwf1, prp10, prp12/sap130, prp17, prp22, sap61, sap62, sap114, sap145, slu7, smb1, smd1, smd3, smf1, smg1 and syf2.

It localises to the cytoplasm. The protein localises to the nucleus. It catalyses the reaction [protein]-peptidylproline (omega=180) = [protein]-peptidylproline (omega=0). Functionally, PPIases accelerate the folding of proteins. Catalyzes the cis-trans isomerization of proline imidic peptide bonds in oligopeptides. Involved in pre-mRNA splicing. This is Peptidylprolyl isomerase cyp7 (cyp7) from Schizosaccharomyces pombe (strain 972 / ATCC 24843) (Fission yeast).